Consider the following 245-residue polypeptide: Protein canopy homolog 4 (245 aa).

A signal peptide spans 1–27 (MCGLRFIMGPVRLEILLFILAAYGAWA). Disulfide bonds link cysteine 44–cysteine 202, cysteine 47–cysteine 190, and cysteine 100–cysteine 162. The tract at residues 207–245 (WTGKEKISDGQEEADDEEEEEEEEITKTSGNPKHDPEDL) is disordered. The stretch at 209–237 (GKEKISDGQEEADDEEEEEEEEITKTSGN) forms a coiled coil. Acidic residues predominate over residues 216-230 (GQEEADDEEEEEEEE).

Belongs to the canopy family. As to quaternary structure, interacts with TLR4. In terms of tissue distribution, highly expressed in lung, spleen, thymus, and uterus. Moderately expressed in kidney, stomach and placenta. Weakly expressed in brain, heart, liver, small intestine, skeletal muscle and testis.

The protein resides in the secreted. Functionally, plays a role in the regulation of the cell surface expression of TLR4. The polypeptide is Protein canopy homolog 4 (Cnpy4) (Mus musculus (Mouse)).